Here is a 484-residue protein sequence, read N- to C-terminus: Sucrose-6-phosphate hydrolase (484 aa).

Residues 48–51 (LLND), Q67, 110–111 (YS), 168–169 (RD), and E223 contribute to the substrate site. D51 is a catalytic residue.

It belongs to the glycosyl hydrolase 32 family.

Its subcellular location is the cytoplasm. It carries out the reaction Hydrolysis of terminal non-reducing beta-D-fructofuranoside residues in beta-D-fructofuranosides.. It participates in glycan biosynthesis; sucrose metabolism. In terms of biological role, enables the bacterium to metabolize sucrose as a sole carbon source. This Vibrio alginolyticus protein is Sucrose-6-phosphate hydrolase (scrB).